The following is a 133-amino-acid chain: Ribonuclease VapC28 (133 aa).

Positions 1–124 constitute a PINc domain; that stretch reads MIVDTSAIIA…LWKGNDFGHT (124 aa). The Mg(2+) site is built by Asp4 and Asp100.

The protein belongs to the PINc/VapC protein family. The cofactor is Mg(2+).

Toxic component of a type II toxin-antitoxin (TA) system. An RNase. Upon expression in M.smegmatis inhibits colony formation. Its toxic effect is neutralized by coexpression with cognate antitoxin VapB28. This is Ribonuclease VapC28 from Mycobacterium tuberculosis (strain ATCC 25618 / H37Rv).